The following is a 345-amino-acid chain: Acyl-CoA--sterol O-acyltransferase 1 (345 aa).

Helical transmembrane passes span 1–21, 32–52, 54–74, 86–106, 120–140, 148–168, 231–251, 258–278, and 291–311; these read MASF…TFFI, LILF…IYSL, LLGI…LLFA, PLSL…QLSP, GPLI…AYEY, VVLT…LAAT, ILAA…IFFY, DWKM…EIAI, and AISQ…LFLP.

Belongs to the wax synthase family.

It localises to the membrane. In terms of biological role, involved in the esterification of cycloartenol. Not implicated in the formation of sterol esters in flowers or during seed maturation. Has a substrate preference toward saturated fatty acyl donors (16:0 &gt; 18:0 &gt; 16:1 &gt; 18:1). Does not require triacyglycerols (TAGs) as a fatty acyl donor, and is unable to acylate diacylglycerol to produce TAG. This is Acyl-CoA--sterol O-acyltransferase 1 (ASAT1) from Arabidopsis thaliana (Mouse-ear cress).